A 479-amino-acid chain; its full sequence is MTLRFYDTASATIKDFVPVHPGEARLYYCGATVQGAPHIGHVRSALVFDVLARWLRFRGLEVTTVRNVTDIDDKILVNSRASYEQDYSGDHAREPWWALAYRFEGVFGQAYAALGIDRPTYEPRATGHVPEMHALIQELIDAGHAYPATDGSGDVYFDVRSWPRYGELTRQRVEDMQDAPDADPRGKRDPRDFALWKGRKEDEPLSASWDSPWGRGRPGWHLECSAMAGKYLGAHFDIHGGGLDLRFPHHENELAQSTAAGREFANFWLHNGLVTYEGEKMSKSIGNTVSPQDMLREARPLAVRYYLGQAHYRSVLDYRPTSLQEATAAVERVEAVLVAARAAGLGLDRDTQDVPAEFVAVMDDDLNVPRALAVLHETVRAANSALATGDHDAARPLVAAVAGMSDVLGLLQLMDLEGAGAGGAEHRALDVLVQDLLAQRAAARTARDWASADRIRDQLAAAGVVVKDGAQGSAWSVES.

Residue Cys-29 participates in Zn(2+) binding. The short motif at 31-41 (ATVQGAPHIGH) is the 'HIGH' region element. The disordered stretch occupies residues 171 to 197 (QRVEDMQDAPDADPRGKRDPRDFALWK). Positions 182–197 (ADPRGKRDPRDFALWK) are enriched in basic and acidic residues. Residues Cys-224, His-249, and Glu-253 each contribute to the Zn(2+) site. The 'KMSKS' region motif lies at 280–284 (KMSKS). An ATP-binding site is contributed by Lys-283.

It belongs to the class-I aminoacyl-tRNA synthetase family. Monomer. The cofactor is Zn(2+).

It localises to the cytoplasm. The catalysed reaction is tRNA(Cys) + L-cysteine + ATP = L-cysteinyl-tRNA(Cys) + AMP + diphosphate. The polypeptide is Cysteine--tRNA ligase (Kocuria rhizophila (strain ATCC 9341 / DSM 348 / NBRC 103217 / DC2201)).